We begin with the raw amino-acid sequence, 236 residues long: Purine nucleoside phosphorylase DeoD-type (236 aa).

Residue H4 coordinates a purine D-ribonucleoside. Phosphate-binding positions include G20, R24, R43, and 87 to 90 (RVGS). Residues 179 to 181 (EME) and 203 to 204 (SD) contribute to the a purine D-ribonucleoside site. D204 serves as the catalytic Proton donor.

The protein belongs to the PNP/UDP phosphorylase family. In terms of assembly, homohexamer; trimer of homodimers.

It carries out the reaction a purine D-ribonucleoside + phosphate = a purine nucleobase + alpha-D-ribose 1-phosphate. The enzyme catalyses a purine 2'-deoxy-D-ribonucleoside + phosphate = a purine nucleobase + 2-deoxy-alpha-D-ribose 1-phosphate. Functionally, catalyzes the reversible phosphorolytic breakdown of the N-glycosidic bond in the beta-(deoxy)ribonucleoside molecules, with the formation of the corresponding free purine bases and pentose-1-phosphate. This Limosilactobacillus reuteri (strain DSM 20016) (Lactobacillus reuteri) protein is Purine nucleoside phosphorylase DeoD-type.